A 152-amino-acid polypeptide reads, in one-letter code: Deoxyuridine 5'-triphosphate nucleotidohydrolase (152 aa).

Residues 71–73 (RSG), N84, 88–90 (LID), and M98 each bind substrate.

It belongs to the dUTPase family. Homotrimer. It depends on Mg(2+) as a cofactor.

The enzyme catalyses dUTP + H2O = dUMP + diphosphate + H(+). It functions in the pathway pyrimidine metabolism; dUMP biosynthesis; dUMP from dCTP (dUTP route): step 2/2. This enzyme is involved in nucleotide metabolism: it produces dUMP, the immediate precursor of thymidine nucleotides and it decreases the intracellular concentration of dUTP so that uracil cannot be incorporated into DNA. This Escherichia coli O1:K1 / APEC protein is Deoxyuridine 5'-triphosphate nucleotidohydrolase.